The primary structure comprises 175 residues: Tumor necrosis factor receptor superfamily member 13C (175 aa).

The Extracellular segment spans residues 1–71; sequence MGARRLRVRS…EGSALRPDVA (71 aa). A TNFR-Cys; truncated repeat occupies 21 to 38; it reads QCNQTECFDPLVRNCVSC. 2 cysteine pairs are disulfide-bonded: Cys22–Cys35 and Cys27–Cys38. The N-linked (GlcNAc...) asparagine glycan is linked to Asn23. Positions 29–34 are essential for TNFSF13B/TALL1/BAFF/BLyS binding; that stretch reads DPLVRN. Residues 72-92 traverse the membrane as a helical; Signal-anchor for type III membrane protein segment; the sequence is LLVGAPALLGLILALTLVGLV. The Cytoplasmic portion of the chain corresponds to 93-175; it reads SLVSWRWRQQ…VTTKTAGPEQ (83 aa). The disordered stretch occupies residues 124 to 175; that stretch reads VPSSETPHASAPTWPPLKEDADSALPRHSVPVPATELGSTELVTTKTAGPEQ. Polar residues predominate over residues 160–175; the sequence is LGSTELVTTKTAGPEQ.

As to expression, highly expressed in spleen and testis; detected at lower levels in lung and thymus.

The protein resides in the membrane. B-cell receptor specific for TNFSF13B/TALL1/BAFF/BLyS. Promotes the survival of mature B-cells and the B-cell response. The protein is Tumor necrosis factor receptor superfamily member 13C (Tnfrsf13c) of Mus musculus (Mouse).